The primary structure comprises 275 residues: Large ribosomal subunit protein uL2c (275 aa).

Disordered regions lie at residues 36 to 56 (KNHR…HRGK) and 224 to 275 (VMNP…RKRK). The span at 255–275 (LGRKTRKKPKYSNRYILRKRK) shows a compositional bias: basic residues.

The protein belongs to the universal ribosomal protein uL2 family. As to quaternary structure, part of the 50S ribosomal subunit.

Its subcellular location is the plastid. The protein resides in the chloroplast. In Gracilaria tenuistipitata var. liui (Red alga), this protein is Large ribosomal subunit protein uL2c (rpl2).